Consider the following 352-residue polypeptide: Ion-translocating oxidoreductase complex subunit D (352 aa).

Helical transmembrane passes span 20 to 40, 42 to 62, 78 to 109, 123 to 143, and 148 to 168; these read IMLL…WFFG, GTLV…ALVL, ALLT…VIIA, PAMI…TSWL, and IAVN…GHTA. Residue T187 is modified to FMN phosphoryl threonine. 5 helical membrane passes run 214–234, 242–262, 267–287, 301–321, and 322–342; these read ILAG…GVWL, WHIP…GWLF, LAAP…FFIL, LIFG…GGYP, and DGVA…DYYT.

It belongs to the NqrB/RnfD family. As to quaternary structure, the complex is composed of six subunits: RsxA, RsxB, RsxC, RsxD, RsxE and RsxG. It depends on FMN as a cofactor.

It localises to the cell inner membrane. Its function is as follows. Part of a membrane-bound complex that couples electron transfer with translocation of ions across the membrane. Required to maintain the reduced state of SoxR. Probably transfers electron from NAD(P)H to SoxR. The protein is Ion-translocating oxidoreductase complex subunit D of Escherichia coli (strain K12).